The following is a 121-amino-acid chain: Small ribosomal subunit protein bS6 (121 aa).

The protein belongs to the bacterial ribosomal protein bS6 family.

Its function is as follows. Binds together with bS18 to 16S ribosomal RNA. In Pelagibacter ubique (strain HTCC1062), this protein is Small ribosomal subunit protein bS6.